The following is a 350-amino-acid chain: Deoxyhypusine synthase-like protein (350 aa).

This sequence belongs to the deoxyhypusine synthase family.

The polypeptide is Deoxyhypusine synthase-like protein (Chlorobaculum parvum (strain DSM 263 / NCIMB 8327) (Chlorobium vibrioforme subsp. thiosulfatophilum)).